We begin with the raw amino-acid sequence, 243 residues long: Orotidine 5'-phosphate decarboxylase (243 aa).

Substrate is bound by residues Asp-18, Lys-39, 66 to 75 (DLKFHDIPAT), Thr-130, Arg-192, Gln-201, Gly-221, and Arg-222. Lys-68 serves as the catalytic Proton donor.

Belongs to the OMP decarboxylase family. Type 1 subfamily. As to quaternary structure, homodimer.

The catalysed reaction is orotidine 5'-phosphate + H(+) = UMP + CO2. The protein operates within pyrimidine metabolism; UMP biosynthesis via de novo pathway; UMP from orotate: step 2/2. Functionally, catalyzes the decarboxylation of orotidine 5'-monophosphate (OMP) to uridine 5'-monophosphate (UMP). The polypeptide is Orotidine 5'-phosphate decarboxylase (Synechococcus sp. (strain WH7803)).